We begin with the raw amino-acid sequence, 244 residues long: Phosphoadenosine 5'-phosphosulfate reductase (244 aa).

Cys239 acts as the Nucleophile; cysteine thiosulfonate intermediate in catalysis.

This sequence belongs to the PAPS reductase family. CysH subfamily.

It is found in the cytoplasm. The enzyme catalyses [thioredoxin]-disulfide + sulfite + adenosine 3',5'-bisphosphate + 2 H(+) = [thioredoxin]-dithiol + 3'-phosphoadenylyl sulfate. Its pathway is sulfur metabolism; hydrogen sulfide biosynthesis; sulfite from sulfate: step 3/3. In terms of biological role, catalyzes the formation of sulfite from phosphoadenosine 5'-phosphosulfate (PAPS) using thioredoxin as an electron donor. In Klebsiella pneumoniae subsp. pneumoniae (strain ATCC 700721 / MGH 78578), this protein is Phosphoadenosine 5'-phosphosulfate reductase.